We begin with the raw amino-acid sequence, 317 residues long: 4-hydroxy-3-methylbut-2-enyl diphosphate reductase (317 aa).

A [4Fe-4S] cluster-binding site is contributed by Cys12. The (2E)-4-hydroxy-3-methylbut-2-enyl diphosphate site is built by His41 and His74. Dimethylallyl diphosphate-binding residues include His41 and His74. Residues His41 and His74 each coordinate isopentenyl diphosphate. [4Fe-4S] cluster is bound at residue Cys97. His125 serves as a coordination point for (2E)-4-hydroxy-3-methylbut-2-enyl diphosphate. His125 is a binding site for dimethylallyl diphosphate. His125 lines the isopentenyl diphosphate pocket. Glu127 (proton donor) is an active-site residue. Position 168 (Thr168) interacts with (2E)-4-hydroxy-3-methylbut-2-enyl diphosphate. Cys198 is a [4Fe-4S] cluster binding site. 4 residues coordinate (2E)-4-hydroxy-3-methylbut-2-enyl diphosphate: Ser226, Ser227, Asn228, and Ser270. Ser226, Ser227, Asn228, and Ser270 together coordinate dimethylallyl diphosphate. Residues Ser226, Ser227, Asn228, and Ser270 each coordinate isopentenyl diphosphate.

The protein belongs to the IspH family. In terms of assembly, homodimer. Requires [4Fe-4S] cluster as cofactor.

It carries out the reaction isopentenyl diphosphate + 2 oxidized [2Fe-2S]-[ferredoxin] + H2O = (2E)-4-hydroxy-3-methylbut-2-enyl diphosphate + 2 reduced [2Fe-2S]-[ferredoxin] + 2 H(+). It catalyses the reaction dimethylallyl diphosphate + 2 oxidized [2Fe-2S]-[ferredoxin] + H2O = (2E)-4-hydroxy-3-methylbut-2-enyl diphosphate + 2 reduced [2Fe-2S]-[ferredoxin] + 2 H(+). The protein operates within isoprenoid biosynthesis; dimethylallyl diphosphate biosynthesis; dimethylallyl diphosphate from (2E)-4-hydroxy-3-methylbutenyl diphosphate: step 1/1. It participates in isoprenoid biosynthesis; isopentenyl diphosphate biosynthesis via DXP pathway; isopentenyl diphosphate from 1-deoxy-D-xylulose 5-phosphate: step 6/6. Functionally, catalyzes the conversion of 1-hydroxy-2-methyl-2-(E)-butenyl 4-diphosphate (HMBPP) into a mixture of isopentenyl diphosphate (IPP) and dimethylallyl diphosphate (DMAPP). Acts in the terminal step of the DOXP/MEP pathway for isoprenoid precursor biosynthesis. In Edwardsiella ictaluri (strain 93-146), this protein is 4-hydroxy-3-methylbut-2-enyl diphosphate reductase.